The chain runs to 333 residues: D-fructose 1,6-bisphosphatase class 2/sedoheptulose 1,7-bisphosphatase (333 aa).

Positions 33, 57, 85, and 88 each coordinate Mn(2+). Residues 88–90 (EGT), Y119, 164–166 (RAR), and 186–188 (DGD) contribute to the substrate site. E213 contacts Mn(2+).

The protein belongs to the FBPase class 2 family. In terms of assembly, homotetramer. It depends on Mn(2+) as a cofactor.

It catalyses the reaction beta-D-fructose 1,6-bisphosphate + H2O = beta-D-fructose 6-phosphate + phosphate. The catalysed reaction is D-sedoheptulose 1,7-bisphosphate + H2O = D-sedoheptulose 7-phosphate + phosphate. Its pathway is carbohydrate biosynthesis; Calvin cycle. In terms of biological role, catalyzes the hydrolysis of fructose 1,6-bisphosphate (Fru 1,6-P2) and sedoheptulose 1,7-bisphosphate (Sed 1,7-P2) to fructose 6-phosphate and sedoheptulose 7-phosphate, respectively. This is D-fructose 1,6-bisphosphatase class 2/sedoheptulose 1,7-bisphosphatase from Prochlorococcus marinus subsp. pastoris (strain CCMP1986 / NIES-2087 / MED4).